A 156-amino-acid polypeptide reads, in one-letter code: Arginine repressor (156 aa).

The protein belongs to the ArgR family.

Its subcellular location is the cytoplasm. Its pathway is amino-acid biosynthesis; L-arginine biosynthesis [regulation]. Its function is as follows. Regulates arginine biosynthesis genes. In Shewanella frigidimarina (strain NCIMB 400), this protein is Arginine repressor.